The primary structure comprises 245 residues: MIVIPAIDLKEGNCVRLEQGEMNRDTVFSDNPAEQALKWQEAGAELLHLVDLDGAFAGIPKNKAAIEAIIKAITIPAQLGGGIRDIATIEAYLSLGLSRVIIGTAAQRNPELVIEACQKFPGRIVVGIDAKNGMVAVQGWAELTDISAVDLAKKFEDCGVAAIIYTDISRDGMMGGPNLEATRALAEAISIPVIASGGVSSLKDIENLMAIEASGVTGAITGKAIYTGAINLREAIDLTKRGCQC.

Catalysis depends on Asp-8, which acts as the Proton acceptor. Asp-129 serves as the catalytic Proton donor.

It belongs to the HisA/HisF family.

The protein resides in the cytoplasm. It catalyses the reaction 1-(5-phospho-beta-D-ribosyl)-5-[(5-phospho-beta-D-ribosylamino)methylideneamino]imidazole-4-carboxamide = 5-[(5-phospho-1-deoxy-D-ribulos-1-ylimino)methylamino]-1-(5-phospho-beta-D-ribosyl)imidazole-4-carboxamide. It participates in amino-acid biosynthesis; L-histidine biosynthesis; L-histidine from 5-phospho-alpha-D-ribose 1-diphosphate: step 4/9. The sequence is that of 1-(5-phosphoribosyl)-5-[(5-phosphoribosylamino)methylideneamino] imidazole-4-carboxamide isomerase from Trichlorobacter lovleyi (strain ATCC BAA-1151 / DSM 17278 / SZ) (Geobacter lovleyi).